We begin with the raw amino-acid sequence, 256 residues long: Trans-aconitate 2-methyltransferase (256 aa).

This sequence belongs to the methyltransferase superfamily. Tam family.

It localises to the cytoplasm. It catalyses the reaction trans-aconitate + S-adenosyl-L-methionine = (E)-3-(methoxycarbonyl)pent-2-enedioate + S-adenosyl-L-homocysteine. Its function is as follows. Catalyzes the S-adenosylmethionine monomethyl esterification of trans-aconitate. In Afipia carboxidovorans (strain ATCC 49405 / DSM 1227 / KCTC 32145 / OM5) (Oligotropha carboxidovorans), this protein is Trans-aconitate 2-methyltransferase.